Reading from the N-terminus, the 864-residue chain is DNA mismatch repair protein MutS (864 aa).

623–630 serves as a coordination point for ATP; that stretch reads GPNMGGKS.

Belongs to the DNA mismatch repair MutS family.

Functionally, this protein is involved in the repair of mismatches in DNA. It is possible that it carries out the mismatch recognition step. This protein has a weak ATPase activity. The polypeptide is DNA mismatch repair protein MutS (Polaromonas sp. (strain JS666 / ATCC BAA-500)).